Here is a 226-residue protein sequence, read N- to C-terminus: Transmembrane 4 L6 family member 20 (226 aa).

Residues 1–14 (MTCCEGWTSCNGFS) lie on the Lumenal side of the membrane. A helical membrane pass occupies residues 15–35 (LLILILLGVVINCIPLGISLV). Over 36-49 (EADSTSQNPISCYE) the chain is Cytoplasmic. A helical transmembrane segment spans residues 50–70 (WWFPGIIGAGLMAIPATTMSL). Residues 71 to 83 (AARKRACCNNKTG) lie on the Lumenal side of the membrane. The helical transmembrane segment at 84 to 104 (MFLSSLFSVITVVGAVYCMLV) threads the bilayer. The Cytoplasmic segment spans residues 105 to 191 (SLQALLEGPL…RIFHFSVFMS (87 aa)). A helical transmembrane segment spans residues 192–212 (LLLVGILELLFGLSQILIGFL). The Lumenal portion of the chain corresponds to 213-226 (GCLCGVSQRRSQIV).

This sequence belongs to the L6 tetraspanin family. Glycosylated at Asn-132, Asn-148 and Asn-163 in presence of ceramide which inverts the orientation of TM4SF20 in membranes exposing these residues to the endoplasmic reticulum lumen. Post-translationally, cleaved by signal peptidase at Ser-14 but the peptide does not act as a signal peptide. Cleavage is inhibited by ceramide which inverts the orientation of TM4SF20 in membranes exposing the N-terminus to the cytosol and not to the endoplasmic reticulum lumen.

The protein resides in the membrane. The protein localises to the endoplasmic reticulum membrane. In terms of biological role, polytopic transmembrane protein. Inhibits regulated intramembrane proteolysis (RIP) of CREB3L1, inhibiting its activation and the induction of collagen synthesis. In response to ceramide, which alters TM4SF20 membrane topology, stimulates RIP activation of CREB3L1. Ceramide reverses the direction through which transmembrane helices are translocated into the endoplasmic reticulum membrane during translation of TM4SF20, this mechanism is called 'regulated alternative translocation' (RAT) and regulates the function of the transmembrane protein. This is Transmembrane 4 L6 family member 20 (Tm4sf20) from Mus musculus (Mouse).